Reading from the N-terminus, the 158-residue chain is Cysteine proteinase inhibitor 4 (158 aa).

A signal peptide spans 1–24; it reads MAARCPVGVASVLLLIVLVTVASA. The segment at 26–51 is disordered; sequence SGARSGGGGGGGIRELRGGGAGRRVG. Residues 29–49 are compositionally biased toward gly residues; it reads RSGGGGGGGIRELRGGGAGRR. The Cystatin domain occupies 51-116; it reads GGRTEVRDVE…KYYLRVAAAE (66 aa). The Secondary area of contact signature appears at 101-105; that stretch reads QVVSG.

This sequence belongs to the cystatin family. Phytocystatin subfamily.

Its subcellular location is the secreted. Specific inhibitor of cysteine proteinases. Probably involved in the regulation of endogenous processes and in defense against pests and pathogens. In Oryza sativa subsp. japonica (Rice), this protein is Cysteine proteinase inhibitor 4.